The chain runs to 195 residues: Rho-related protein racB (195 aa).

Residue 10–17 coordinates GTP; the sequence is GDGAVGKT. The Effector region motif lies at 32–40; that stretch reads YVPTVFDNY. GTP is bound by residues 57–61 and 115–118; these read DTAGQ and TKCD. Cysteine 192 bears the Cysteine methyl ester mark. Residue cysteine 192 is the site of S-geranylgeranyl cysteine attachment. The propeptide at 193-195 is removed in mature form; it reads SIL.

This sequence belongs to the small GTPase superfamily. Rho family. In terms of assembly, interacts with pakB.

The protein resides in the cell membrane. This Dictyostelium discoideum (Social amoeba) protein is Rho-related protein racB (racB).